Consider the following 92-residue polypeptide: Non-specific lipid-transfer protein 1 (92 aa).

Intrachain disulfides connect Cys-4–Cys-52, Cys-14–Cys-28, Cys-29–Cys-74, and Cys-50–Cys-88.

The protein belongs to the plant LTP family. Expressed in seeds and, at very low levels, in pulp of fruit (at protein level).

Functionally, plant non-specific lipid-transfer proteins transfer phospholipids as well as galactolipids across membranes. May play a role in wax or cutin deposition in the cell walls of expanding epidermal cells and certain secretory tissues. The sequence is that of Non-specific lipid-transfer protein 1 from Actinidia deliciosa (Kiwi).